Consider the following 263-residue polypeptide: MNGIRKKPATLQLHNIKTSCFIDGSDDQSDRTRSSSGDSTSNSLKLSHHISDELINAIYKELKSPVSPWDKNISQHSPWLLEAASNSIGDSSPLLSPISPLKLRFHKYSVSKQLNSVGKQGFGLSSNHSRYASPSSPARLARGALGEELSNSQYRLECAAIQKLVAQKRANRRSSKSTLKNSANDIEFFDIEEVSSRKGLIDRTPSKRNVTSRVSDAYSRLKSAVKGESSLSFKRNRSKSKRKIQHLGLTEFNGWEHHQCDWL.

The tract at residues 22–44 (IDGSDDQSDRTRSSSGDSTSNSL) is disordered. Residues 34–43 (SSSGDSTSNS) are compositionally biased toward low complexity.

The protein localises to the mitochondrion. This is an uncharacterized protein from Schizosaccharomyces pombe (strain 972 / ATCC 24843) (Fission yeast).